Here is an 81-residue protein sequence, read N- to C-terminus: MSHTVKIYDTCIGCTQCVRACPTDVLEMVPWDGCKAAQIASSPRTEDCVGCKRCETACPTDFLSIRVYLGAETTRSMGLAY.

4Fe-4S ferredoxin-type domains lie at 2–31 (SHTVKIYDTCIGCTQCVRACPTDVLEMVPW) and 39–68 (IASSPRTEDCVGCKRCETACPTDFLSIRVY). [4Fe-4S] cluster is bound by residues cysteine 11, cysteine 14, cysteine 17, cysteine 21, cysteine 48, cysteine 51, cysteine 54, and cysteine 58.

In terms of assembly, the cyanobacterial PSI reaction center is composed of one copy each of PsaA,B,C,D,E,F,I,J,K,L,M and X, and forms trimeric complexes. [4Fe-4S] cluster is required as a cofactor.

Its subcellular location is the cellular thylakoid membrane. It catalyses the reaction reduced [plastocyanin] + hnu + oxidized [2Fe-2S]-[ferredoxin] = oxidized [plastocyanin] + reduced [2Fe-2S]-[ferredoxin]. In terms of biological role, apoprotein for the two 4Fe-4S centers FA and FB of photosystem I (PSI); essential for photochemical activity. FB is the terminal electron acceptor of PSI, donating electrons to ferredoxin. The C-terminus interacts with PsaA/B/D and helps assemble the protein into the PSI complex. Required for binding of PsaD and PsaE to PSI. PSI is a plastocyanin/cytochrome c6-ferredoxin oxidoreductase, converting photonic excitation into a charge separation, which transfers an electron from the donor P700 chlorophyll pair to the spectroscopically characterized acceptors A0, A1, FX, FA and FB in turn. The polypeptide is Photosystem I iron-sulfur center (Microchaete diplosiphon (Fremyella diplosiphon)).